Consider the following 262-residue polypeptide: Acyl-[acyl-carrier-protein]--UDP-N-acetylglucosamine O-acyltransferase (262 aa).

This sequence belongs to the transferase hexapeptide repeat family. LpxA subfamily. Homotrimer.

It is found in the cytoplasm. The catalysed reaction is a (3R)-hydroxyacyl-[ACP] + UDP-N-acetyl-alpha-D-glucosamine = a UDP-3-O-[(3R)-3-hydroxyacyl]-N-acetyl-alpha-D-glucosamine + holo-[ACP]. It participates in glycolipid biosynthesis; lipid IV(A) biosynthesis; lipid IV(A) from (3R)-3-hydroxytetradecanoyl-[acyl-carrier-protein] and UDP-N-acetyl-alpha-D-glucosamine: step 1/6. Involved in the biosynthesis of lipid A, a phosphorylated glycolipid that anchors the lipopolysaccharide to the outer membrane of the cell. The sequence is that of Acyl-[acyl-carrier-protein]--UDP-N-acetylglucosamine O-acyltransferase from Escherichia coli O157:H7.